Reading from the N-terminus, the 281-residue chain is 2-dehydro-3-deoxyphosphooctonate aldolase (281 aa).

It belongs to the KdsA family.

It localises to the cytoplasm. It carries out the reaction D-arabinose 5-phosphate + phosphoenolpyruvate + H2O = 3-deoxy-alpha-D-manno-2-octulosonate-8-phosphate + phosphate. It participates in carbohydrate biosynthesis; 3-deoxy-D-manno-octulosonate biosynthesis; 3-deoxy-D-manno-octulosonate from D-ribulose 5-phosphate: step 2/3. The protein operates within bacterial outer membrane biogenesis; lipopolysaccharide biosynthesis. The chain is 2-dehydro-3-deoxyphosphooctonate aldolase from Stutzerimonas stutzeri (strain A1501) (Pseudomonas stutzeri).